The sequence spans 397 residues: Argininosuccinate synthase (397 aa).

9 to 17 (AYSGGLDTS) contributes to the ATP binding site. Tyr-87 provides a ligand contact to L-citrulline. Gly-117 serves as a coordination point for ATP. Thr-119, Asn-123, and Asp-124 together coordinate L-aspartate. An L-citrulline-binding site is contributed by Asn-123. 5 residues coordinate L-citrulline: Arg-127, Ser-175, Ser-184, Glu-260, and Tyr-272.

Belongs to the argininosuccinate synthase family. Type 1 subfamily. In terms of assembly, homotetramer.

The protein localises to the cytoplasm. It carries out the reaction L-citrulline + L-aspartate + ATP = 2-(N(omega)-L-arginino)succinate + AMP + diphosphate + H(+). It functions in the pathway amino-acid biosynthesis; L-arginine biosynthesis; L-arginine from L-ornithine and carbamoyl phosphate: step 2/3. In Methanococcus maripaludis (strain DSM 14266 / JCM 13030 / NBRC 101832 / S2 / LL), this protein is Argininosuccinate synthase.